Here is a 31-residue protein sequence, read N- to C-terminus: Photosystem II reaction center protein T (31 aa).

A helical transmembrane segment spans residues 3–23; the sequence is AIVYTFLLVGTLGIIFFAIFF.

Belongs to the PsbT family. As to quaternary structure, PSII is composed of 1 copy each of membrane proteins PsbA, PsbB, PsbC, PsbD, PsbE, PsbF, PsbH, PsbI, PsbJ, PsbK, PsbL, PsbM, PsbT, PsbY, PsbZ, Psb30/Ycf12, at least 3 peripheral proteins of the oxygen-evolving complex and a large number of cofactors. It forms dimeric complexes.

It is found in the plastid. Its subcellular location is the chloroplast thylakoid membrane. Its function is as follows. Found at the monomer-monomer interface of the photosystem II (PS II) dimer, plays a role in assembly and dimerization of PSII. PSII is a light-driven water plastoquinone oxidoreductase, using light energy to abstract electrons from H(2)O, generating a proton gradient subsequently used for ATP formation. The chain is Photosystem II reaction center protein T from Ostreococcus tauri.